A 490-amino-acid polypeptide reads, in one-letter code: Betaine aldehyde dehydrogenase (490 aa).

Positions 26, 27, and 93 each coordinate K(+). 150–152 is an NAD(+) binding site; that stretch reads GAW. The active-site Charge relay system is the Lys-162. 176–179 lines the NAD(+) pocket; sequence KPSE. Val-180 contributes to the K(+) binding site. 230–233 contributes to the NAD(+) binding site; sequence GTDT. Position 246 (Leu-246) interacts with K(+). Catalysis depends on Glu-252, which acts as the Proton acceptor. 3 residues coordinate NAD(+): Gly-254, Cys-286, and Glu-387. Cys-286 functions as the Nucleophile in the catalytic mechanism. Position 286 is a cysteine sulfenic acid (-SOH) (Cys-286). Residues Lys-457 and Gly-460 each coordinate K(+). The Charge relay system role is filled by Glu-464.

It belongs to the aldehyde dehydrogenase family. As to quaternary structure, dimer of dimers. Requires K(+) as cofactor.

It catalyses the reaction betaine aldehyde + NAD(+) + H2O = glycine betaine + NADH + 2 H(+). It participates in amine and polyamine biosynthesis; betaine biosynthesis via choline pathway; betaine from betaine aldehyde: step 1/1. In terms of biological role, involved in the biosynthesis of the osmoprotectant glycine betaine. Catalyzes the irreversible oxidation of betaine aldehyde to the corresponding acid. This chain is Betaine aldehyde dehydrogenase, found in Pseudomonas syringae pv. tomato (strain ATCC BAA-871 / DC3000).